The following is an 82-amino-acid chain: Large ribosomal subunit protein uL23 (82 aa).

The protein belongs to the universal ribosomal protein uL23 family. In terms of assembly, part of the 50S ribosomal subunit. Contacts protein L29.

In terms of biological role, binds to 23S rRNA. One of the proteins that surrounds the polypeptide exit tunnel on the outside of the ribosome. This Methanosarcina barkeri (strain Fusaro / DSM 804) protein is Large ribosomal subunit protein uL23.